Here is a 793-residue protein sequence, read N- to C-terminus: Netrin-B (793 aa).

The first 22 residues, 1-22, serve as a signal peptide directing secretion; sequence MVRATGTRMGLLLPIILALAIG. In terms of domain architecture, Laminin N-terminal spans 39-303; sequence KPRKCLPSFV…NLQDNDSADA (265 aa). N-linked (GlcNAc...) asparagine glycans are attached at residues Asn-103, Asn-125, and Asn-298. Residues 332–378 form a disordered region; sequence SVVKRQGKHKGSAYEKHYQSKLAATTPPQQPPKVTPPGKVTPPSTAA. The segment covering 367 to 378 has biased composition (low complexity); sequence PPGKVTPPSTAA. 15 cysteine pairs are disulfide-bonded: Cys-405-Cys-414, Cys-407-Cys-461, Cys-463-Cys-472, Cys-475-Cys-495, Cys-498-Cys-507, Cys-500-Cys-525, Cys-528-Cys-537, Cys-540-Cys-558, Cys-561-Cys-573, Cys-563-Cys-580, Cys-582-Cys-591, Cys-594-Cys-608, Cys-649-Cys-738, Cys-652-Cys-740, and Cys-665-Cys-792. Laminin EGF-like domains lie at 405–497, 498–560, and 561–610; these read CKCN…ECKM, CQCN…VCKR, and CDCH…PCIK. Residues 420 to 446 are disordered; that stretch reads SGSGTALSDQDDGQDEDTPSAPSLANH. Residues 428–437 show a composition bias toward acidic residues; that stretch reads DQDDGQDEDT. In terms of domain architecture, NTR spans 649–792; it reads CGKCKASPKK…KRFQRRARKC (144 aa). Asn-746 is a glycosylation site (N-linked (GlcNAc...) asparagine).

As to quaternary structure, binds to unc-5 and fra receptors. As to expression, at 24 hr after puparium formation (APF), detected in the most anterior (oldest) L3, L4 and L5 lamina neurons (at protein level). At 48 hr APF, expressed in all L3, L4 and L5 neurons with slightly higher expression in the L3 neurons (at protein level). At the midline of developing CNS and in different subsets of neurons, muscles, and epidermal patches.

It localises to the secreted. It is found in the extracellular space. The protein localises to the extracellular matrix. The protein resides in the cytoplasm. Its subcellular location is the perinuclear region. Its function is as follows. Netrins control guidance of CNS commissural axons and peripheral motor axons. Its association with either fra or unc-5 receptors will lead to axon attraction or repulsion, respectively. While short-range repulsion requires both fra and unc-5 receptors, long-range repulsion only requires unc-5. The protein is Netrin-B (NetB) of Drosophila melanogaster (Fruit fly).